Reading from the N-terminus, the 173-residue chain is Adenine phosphoribosyltransferase (173 aa).

Belongs to the purine/pyrimidine phosphoribosyltransferase family. In terms of assembly, homodimer.

The protein resides in the cytoplasm. It carries out the reaction AMP + diphosphate = 5-phospho-alpha-D-ribose 1-diphosphate + adenine. It participates in purine metabolism; AMP biosynthesis via salvage pathway; AMP from adenine: step 1/1. Functionally, catalyzes a salvage reaction resulting in the formation of AMP, that is energically less costly than de novo synthesis. In Desulfosudis oleivorans (strain DSM 6200 / JCM 39069 / Hxd3) (Desulfococcus oleovorans), this protein is Adenine phosphoribosyltransferase.